Consider the following 460-residue polypeptide: Malonyl-coenzyme A:anthocyanin 3-O-glucoside-6''-O-malonyltransferase (460 aa).

Catalysis depends on proton acceptor residues H173 and D400.

Belongs to the plant acyltransferase family.

It carries out the reaction an anthocyanidin 3-O-beta-D-glucoside + malonyl-CoA = an anthocyanidin 3-O-(6-O-malonyl-beta-D-glucoside) + CoA. Its activity is regulated as follows. Completely inhibited by 5 mM N-ethylmaleimide or 0.1 mM Cu(2+). Partially inhibited by 0.1 mM Fe(2+) or 0.1 mM Hg(2+). In terms of biological role, catalyzes the transfer of the malonyl group from malonyl-CoA to pelargonidin 3-O-glucoside to produce pelargonidin 3-O-6''-O-malonylglucoside. Can also transfer the malonyl group from malonyl-CoA to cyanidin 3-O-glucoside, delphinidin 3-O-glucoside and quercetin 3-O-glucoside. In Dahlia pinnata (Pinnate dahlia), this protein is Malonyl-coenzyme A:anthocyanin 3-O-glucoside-6''-O-malonyltransferase.